The primary structure comprises 379 residues: Fucose-specific lectin g276 (379 aa).

An alpha-L-fucose-binding site is contributed by Glu126. Beta-L-fucose contacts are provided by Glu126, Arg163, and Trp185. Alpha-L-fucose is bound by residues Trp185, Arg222, and Glu234. Residues Trp242 and Glu282 each coordinate beta-L-fucose. Residue Trp289 participates in alpha-L-fucose binding.

The protein belongs to the fungal fucose-specific lectin family.

In terms of biological role, lectin that specifically binds to L-fucose. Is associated with the morphogenesis of the fungus, and plays a role in the formation of the constricting rings involved in nematode-trapping. This Arthrobotrys oligospora (strain ATCC 24927 / CBS 115.81 / DSM 1491) (Nematode-trapping fungus) protein is Fucose-specific lectin g276.